We begin with the raw amino-acid sequence, 557 residues long: 2-succinyl-5-enolpyruvyl-6-hydroxy-3-cyclohexene-1-carboxylate synthase (557 aa).

Belongs to the TPP enzyme family. MenD subfamily. As to quaternary structure, homodimer. The cofactor is Mg(2+). Mn(2+) serves as cofactor. It depends on thiamine diphosphate as a cofactor.

The catalysed reaction is isochorismate + 2-oxoglutarate + H(+) = 5-enolpyruvoyl-6-hydroxy-2-succinyl-cyclohex-3-ene-1-carboxylate + CO2. It participates in quinol/quinone metabolism; 1,4-dihydroxy-2-naphthoate biosynthesis; 1,4-dihydroxy-2-naphthoate from chorismate: step 2/7. Its pathway is quinol/quinone metabolism; menaquinone biosynthesis. Its function is as follows. Catalyzes the thiamine diphosphate-dependent decarboxylation of 2-oxoglutarate and the subsequent addition of the resulting succinic semialdehyde-thiamine pyrophosphate anion to isochorismate to yield 2-succinyl-5-enolpyruvyl-6-hydroxy-3-cyclohexene-1-carboxylate (SEPHCHC). This chain is 2-succinyl-5-enolpyruvyl-6-hydroxy-3-cyclohexene-1-carboxylate synthase, found in Phocaeicola vulgatus (strain ATCC 8482 / DSM 1447 / JCM 5826 / CCUG 4940 / NBRC 14291 / NCTC 11154) (Bacteroides vulgatus).